We begin with the raw amino-acid sequence, 70 residues long: UPF0270 protein VS_2853 (70 aa).

It belongs to the UPF0270 family.

This is UPF0270 protein VS_2853 from Vibrio atlanticus (strain LGP32) (Vibrio splendidus (strain Mel32)).